The chain runs to 245 residues: TLC domain-containing protein 5 (245 aa).

6 helical membrane passes run 1–21 (MALA…SLYI), 38–58 (LVTF…GFID), 75–95 (VHVL…CVYF), 99–119 (GALM…ALVL), 162–182 (FLFV…LLFC), and 191–211 (WFVK…MFSI). In terms of domain architecture, TLC spans 29 to 204 (HRSYEWSCRL…AGGVAMYAVS (176 aa)).

This sequence belongs to the TLCD5 family.

It localises to the membrane. This is TLC domain-containing protein 5 from Homo sapiens (Human).